We begin with the raw amino-acid sequence, 267 residues long: Putative carbamate hydrolase RutD (267 aa).

The AB hydrolase-1 domain maps to 23–139 (VVLLSSGLGG…IQRCFDTRIH (117 aa)).

Belongs to the AB hydrolase superfamily. Hydrolase RutD family.

The enzyme catalyses carbamate + 2 H(+) = NH4(+) + CO2. Its function is as follows. Involved in pyrimidine catabolism. May facilitate the hydrolysis of carbamate, a reaction that can also occur spontaneously. The chain is Putative carbamate hydrolase RutD from Caulobacter segnis (strain ATCC 21756 / DSM 7131 / JCM 7823 / NBRC 15250 / LMG 17158 / TK0059) (Mycoplana segnis).